The following is a 273-amino-acid chain: Cell wall mannoprotein 1 (273 aa).

The signal sequence occupies residues 1–17; sequence MRFSAIFTLGLAGTALA. The disordered stretch occupies residues 173 to 247; that stretch reads DVSDSAPSSS…GSASATSPPL (75 aa). Residues 177-247 show a composition bias toward low complexity; it reads SAPSSSAGSS…GSASATSPPL (71 aa).

It belongs to the cell wall mannoprotein 1 family. Galactomannoprotein, glycosylated.

The protein resides in the secreted. It is found in the cell wall. Constitutive protein of the cell wall. Antigen target of host humoral immune response. This Aspergillus flavus protein is Cell wall mannoprotein 1.